Consider the following 221-residue polypeptide: Lectin L6 (221 aa).

6 tandem repeats follow at residues 1–38, 39–75, 76–113, 114–150, 151–188, and 189–221. Residues 1–221 are 6 X approximate tandem repeats; the sequence is VQWHQIPGKL…NSVDNIYRSG (221 aa). An intrachain disulfide couples Cys-32 to Cys-36. A disulfide bridge links Cys-108 with Cys-112. An intrachain disulfide couples Cys-183 to Cys-187.

Belongs to the tectonin family. Hemocytes.

It localises to the cytoplasmic vesicle. It is found in the secretory vesicle. Its function is as follows. Lipopolysaccharide-binding protein with Gram-negative antibacterial activity. Binds zinc and calcium. The chain is Lectin L6 from Tachypleus tridentatus (Japanese horseshoe crab).